The following is a 563-amino-acid chain: Germacrene C/D synthase (563 aa).

Residues 1-22 are disordered; the sequence is MESCLSVSSAPPPKKNIQEPVR. Positions 315, 319, and 468 each coordinate Mg(2+). Positions 315-319 match the DDXXD motif motif; it reads DDTYD.

This sequence belongs to the terpene synthase family. The cofactor is Mg(2+). Predominantly expressed in root.

The enzyme catalyses (2E,6E)-farnesyl diphosphate = germacrene C + diphosphate. The catalysed reaction is (2E,6E)-farnesyl diphosphate = (-)-germacrene D + diphosphate. Functionally, mediates formation of germacrene C and germacrene D using farnesyl diphosphate as substrate. Can also catalyze formation of trace of germacrene B. This Valeriana officinalis (Valerian) protein is Germacrene C/D synthase (TPS1).